Reading from the N-terminus, the 212-residue chain is Placenta-specific protein 1 (212 aa).

Residues 1 to 22 form the signal peptide; it reads MKVFKFIGLMILLTSAFSAGSG.

The protein belongs to the PLAC1 family. Expressed in placenta. Localizes primarily to differentiated syncytiotrophoblast throughout gestation as well as to a small population of villous cytotrophoblasts. Also detected in maternal blood and rapidly disappears following delivery, but is not detected in other adult or fetal tissues examined.

Its subcellular location is the secreted. Functionally, may play a role in placental development. In Homo sapiens (Human), this protein is Placenta-specific protein 1.